Reading from the N-terminus, the 319-residue chain is HPr kinase/phosphorylase (319 aa).

Active-site residues include histidine 141 and lysine 162. Glycine 156–serine 163 lines the ATP pocket. Serine 163 lines the Mg(2+) pocket. Aspartate 180 (proton acceptor; for phosphorylation activity. Proton donor; for dephosphorylation activity) is an active-site residue. The tract at residues methionine 204–aspartate 213 is important for the catalytic mechanism of both phosphorylation and dephosphorylation. Residue glutamate 205 coordinates Mg(2+). Arginine 246 is an active-site residue. Positions proline 267–arginine 272 are important for the catalytic mechanism of dephosphorylation.

This sequence belongs to the HPrK/P family. As to quaternary structure, homohexamer. Requires Mg(2+) as cofactor.

It catalyses the reaction [HPr protein]-L-serine + ATP = [HPr protein]-O-phospho-L-serine + ADP + H(+). The enzyme catalyses [HPr protein]-O-phospho-L-serine + phosphate + H(+) = [HPr protein]-L-serine + diphosphate. Its function is as follows. Catalyzes the ATP- as well as the pyrophosphate-dependent phosphorylation of a specific serine residue in HPr, a phosphocarrier protein of the phosphoenolpyruvate-dependent sugar phosphotransferase system (PTS). HprK/P also catalyzes the pyrophosphate-producing, inorganic phosphate-dependent dephosphorylation (phosphorolysis) of seryl-phosphorylated HPr (P-Ser-HPr). The two antagonistic activities of HprK/P are regulated by several intracellular metabolites, which change their concentration in response to the absence or presence of rapidly metabolisable carbon sources (glucose, fructose, etc.) in the growth medium. Therefore, by controlling the phosphorylation state of HPr, HPrK/P is a sensor enzyme that plays a major role in the regulation of carbon metabolism and sugar transport: it mediates carbon catabolite repression (CCR), and regulates PTS-catalyzed carbohydrate uptake and inducer exclusion. This is HPr kinase/phosphorylase from Lactobacillus johnsonii (strain CNCM I-12250 / La1 / NCC 533).